The following is a 462-amino-acid chain: UDP-N-acetylmuramoylalanine--D-glutamate ligase (462 aa).

ATP is bound at residue 118 to 124 (GTNGKST).

It belongs to the MurCDEF family.

It is found in the cytoplasm. The catalysed reaction is UDP-N-acetyl-alpha-D-muramoyl-L-alanine + D-glutamate + ATP = UDP-N-acetyl-alpha-D-muramoyl-L-alanyl-D-glutamate + ADP + phosphate + H(+). The protein operates within cell wall biogenesis; peptidoglycan biosynthesis. Functionally, cell wall formation. Catalyzes the addition of glutamate to the nucleotide precursor UDP-N-acetylmuramoyl-L-alanine (UMA). This Anaeromyxobacter dehalogenans (strain 2CP-C) protein is UDP-N-acetylmuramoylalanine--D-glutamate ligase.